Consider the following 383-residue polypeptide: TnpB-like protein ORF383B (383 aa).

Residues Cys328, Cys331, Cys345, and Cys348 each coordinate Zn(2+).

In the N-terminal section; belongs to the transposase 2 family. The protein in the C-terminal section; belongs to the transposase 35 family.

The polypeptide is TnpB-like protein ORF383B (Acidianus convivator (ATV)).